A 446-amino-acid polypeptide reads, in one-letter code: N-succinylarginine dihydrolase (446 aa).

Residues 19-28 (AGLSFGNVAS), N110, and 137-138 (HR) each bind substrate. Residue E174 is part of the active site. R213 lines the substrate pocket. The active site involves H249. 2 residues coordinate substrate: D251 and N364. Catalysis depends on C370, which acts as the Nucleophile.

Belongs to the succinylarginine dihydrolase family. As to quaternary structure, homodimer.

It carries out the reaction N(2)-succinyl-L-arginine + 2 H2O + 2 H(+) = N(2)-succinyl-L-ornithine + 2 NH4(+) + CO2. It functions in the pathway amino-acid degradation; L-arginine degradation via AST pathway; L-glutamate and succinate from L-arginine: step 2/5. In terms of biological role, catalyzes the hydrolysis of N(2)-succinylarginine into N(2)-succinylornithine, ammonia and CO(2). This is N-succinylarginine dihydrolase from Burkholderia cenocepacia (strain ATCC BAA-245 / DSM 16553 / LMG 16656 / NCTC 13227 / J2315 / CF5610) (Burkholderia cepacia (strain J2315)).